A 108-amino-acid polypeptide reads, in one-letter code: Phosphoribosyl-ATP pyrophosphatase (108 aa).

Belongs to the PRA-PH family.

The protein localises to the cytoplasm. It catalyses the reaction 1-(5-phospho-beta-D-ribosyl)-ATP + H2O = 1-(5-phospho-beta-D-ribosyl)-5'-AMP + diphosphate + H(+). Its pathway is amino-acid biosynthesis; L-histidine biosynthesis; L-histidine from 5-phospho-alpha-D-ribose 1-diphosphate: step 2/9. The protein is Phosphoribosyl-ATP pyrophosphatase of Pelobacter propionicus (strain DSM 2379 / NBRC 103807 / OttBd1).